The primary structure comprises 466 residues: Ribulose bisphosphate carboxylase large chain (466 aa).

Lys5 is modified (N6,N6,N6-trimethyllysine). The substrate site is built by Asn114 and Thr164. The active-site Proton acceptor is Lys166. Substrate is bound at residue Lys168. Mg(2+) is bound by residues Lys192, Asp194, and Glu195. Lys192 carries the post-translational modification N6-carboxylysine. Catalysis depends on His285, which acts as the Proton acceptor. Substrate is bound by residues Arg286, His318, and Ser370.

It belongs to the RuBisCO large chain family. Type I subfamily. Heterohexadecamer of 8 large chains and 8 small chains; disulfide-linked. The disulfide link is formed within the large subunit homodimers. The cofactor is Mg(2+). In terms of processing, the disulfide bond which can form in the large chain dimeric partners within the hexadecamer appears to be associated with oxidative stress and protein turnover.

The protein localises to the plastid. It is found in the chloroplast. It catalyses the reaction 2 (2R)-3-phosphoglycerate + 2 H(+) = D-ribulose 1,5-bisphosphate + CO2 + H2O. The catalysed reaction is D-ribulose 1,5-bisphosphate + O2 = 2-phosphoglycolate + (2R)-3-phosphoglycerate + 2 H(+). Its function is as follows. RuBisCO catalyzes two reactions: the carboxylation of D-ribulose 1,5-bisphosphate, the primary event in carbon dioxide fixation, as well as the oxidative fragmentation of the pentose substrate in the photorespiration process. Both reactions occur simultaneously and in competition at the same active site. The sequence is that of Ribulose bisphosphate carboxylase large chain from Eremothamnus marlothianus.